A 40-amino-acid chain; its full sequence is Natriuretic peptide TNPd (40 aa).

A disulfide bridge links C9 with C25.

It belongs to the natriuretic peptide family. Expressed by the venom gland.

It localises to the secreted. Functionally, snake venom natriuretic peptide that exhibits vasoactive and hypotensive activity. Stimulates cGMP production through the natriuretic peptide receptor 1 (NPR1) with very high potencies for the rat NPR1 (EC(50)=18 nM), and very weak potencies over human NPR1 (30% activation at 10 uM). The sequence is that of Natriuretic peptide TNPd from Oxyuranus microlepidotus (Inland taipan).